Here is a 180-residue protein sequence, read N- to C-terminus: Adenine phosphoribosyltransferase (180 aa).

It belongs to the purine/pyrimidine phosphoribosyltransferase family. In terms of assembly, homodimer.

The protein localises to the cytoplasm. The enzyme catalyses AMP + diphosphate = 5-phospho-alpha-D-ribose 1-diphosphate + adenine. Its pathway is purine metabolism; AMP biosynthesis via salvage pathway; AMP from adenine: step 1/1. Functionally, catalyzes a salvage reaction resulting in the formation of AMP, that is energically less costly than de novo synthesis. In Actinobacillus succinogenes (strain ATCC 55618 / DSM 22257 / CCUG 43843 / 130Z), this protein is Adenine phosphoribosyltransferase.